A 196-amino-acid chain; its full sequence is uncharacterized protein (196 aa).

A helical transmembrane segment spans residues 11–31; sequence ICGFLLVILTIGGVLGGVYLV.

The protein localises to the membrane. This is an uncharacterized protein from Mycoplasma genitalium (strain ATCC 33530 / DSM 19775 / NCTC 10195 / G37) (Mycoplasmoides genitalium).